A 391-amino-acid polypeptide reads, in one-letter code: Acetylgalactosaminyl-O-glycosyl-glycoprotein beta-1,3-N-acetylglucosaminyltransferase (391 aa).

Residues 1–11 lie on the Cytoplasmic side of the membrane; it reads MALPSSRRFKS. A helical; Signal-anchor for type II membrane protein membrane pass occupies residues 12–32; that stretch reads PTTLAFFLVGVTLVVLNQWFL. The Lumenal portion of the chain corresponds to 33–391; that stretch reads QEHRQEKAKG…TAGEQNPDAH (359 aa). Residues N68 and N191 are each glycosylated (N-linked (GlcNAc...) asparagine).

It belongs to the glycosyltransferase 31 family.

Its subcellular location is the golgi apparatus membrane. The enzyme catalyses a 3-O-[N-acetyl-alpha-D-galactosaminyl]-L-threonyl-[protein] + UDP-N-acetyl-alpha-D-glucosamine = a 3-O-[N-acetyl-beta-D-glucosaminyl-(1-&gt;3)-N-acetyl-alpha-D-galactosaminyl]-L-threonyl-[protein] + UDP + H(+). The catalysed reaction is a 3-O-[N-acetyl-alpha-D-galactosaminyl]-L-seryl-[protein] + UDP-N-acetyl-alpha-D-glucosamine = 3-O-[N-acetyl-beta-D-glucosaminyl-(1-&gt;3)-N-acetyl-alpha-D-galactosaminyl]-L-seryl-[protein] + UDP + H(+). The protein operates within protein modification; protein glycosylation. In terms of biological role, beta-1,3-N-acetylglucosaminyltransferase that synthesizes the core 3 structure of the O-glycan, an important precursor in the biosynthesis of mucin-type glycoproteins. Plays an important role in the synthesis of mucin-type O-glycans in digestive organs. The sequence is that of Acetylgalactosaminyl-O-glycosyl-glycoprotein beta-1,3-N-acetylglucosaminyltransferase (B3gnt6) from Mus musculus (Mouse).